We begin with the raw amino-acid sequence, 359 residues long: 3-dehydroquinate synthase (359 aa).

Residues 71–76, 105–109, 129–130, K142, K151, and 169–172 contribute to the NAD(+) site; these read DGEQFK, GVIGD, TT, and CLHT. Zn(2+)-binding residues include E184, H247, and H264.

Belongs to the sugar phosphate cyclases superfamily. Dehydroquinate synthase family. The cofactor is Co(2+). Zn(2+) serves as cofactor. NAD(+) is required as a cofactor.

It localises to the cytoplasm. It catalyses the reaction 7-phospho-2-dehydro-3-deoxy-D-arabino-heptonate = 3-dehydroquinate + phosphate. It functions in the pathway metabolic intermediate biosynthesis; chorismate biosynthesis; chorismate from D-erythrose 4-phosphate and phosphoenolpyruvate: step 2/7. Functionally, catalyzes the conversion of 3-deoxy-D-arabino-heptulosonate 7-phosphate (DAHP) to dehydroquinate (DHQ). In Shewanella putrefaciens (strain CN-32 / ATCC BAA-453), this protein is 3-dehydroquinate synthase.